The sequence spans 499 residues: Cytochrome P450 705A12 (499 aa).

Residues 4–24 (LIIVDFQNISIFILLCLFSFL) form a helical membrane-spanning segment. C439 contributes to the heme binding site.

Belongs to the cytochrome P450 family. The cofactor is heme.

The protein localises to the membrane. Functionally, may be involved in hydroxylation of the triterpene marneral. The polypeptide is Cytochrome P450 705A12 (Arabidopsis thaliana (Mouse-ear cress)).